We begin with the raw amino-acid sequence, 618 residues long: MLTEALEGQLTVVYNTVAASVQVQVEPVGRWFEAFLKRRNRNVSASFQELEEEEELSEEEEDEELQLEEYPMLKTLDPKDWKNQDHYAVLGLAHVRYKATQKQIKAAHKAMVLKHHPDKRKAAGEQIVEGDNDYFTCITKAIEILSDPVKRRAFDSVDPTFDNAVPTKAEGKENFFEVFAPVFERNARWSVKKHFPSLGTMESSFEDVDNFYSFWYNFDSWREFSYLDEEEKEKAECRDERRWIEKQNRASRAQRKKEEMNRIRTLVDTAYNADPRIKKFKEEEKARKESEKKAKVEAKKREQEEKERARQQQEEAARLLKEQQEEAARQAAQQAKKEKEAQKKAIKKERQKLRMTCKSQNYFTDNEADSVRMMEEVEKLCDRLELISLQTLNEALSAGNKEQSKAALEKQVQEVNMQLQKEKDAELQAQQAARGSEHSSAAGGQNNRGWSEEDLQLLIKAVNLFPAGTNARWEVIANYMNQHSSSGVRRTAKDVINKAKTLQKLDPHQKDEINRKAFEKFKKEHSAVPPTVDNAMPSERFDAVGADSNAAAWTTEEQKLLEQALKTYPVSTAERWERISEAVPGRSKKDCMKRYKELVEMIKAKKAAQEQVAAKNKK.

A J domain is found at 85–158 (DHYAVLGLAH…VKRRAFDSVD (74 aa)). 3 disordered regions span residues 281–315 (KEEE…QQEE), 330–349 (QAAQ…IKKE), and 419–448 (LQKE…QNNR). Residues 428-448 (QAQQAARGSEHSSAAGGQNNR) are compositionally biased toward polar residues. 2 consecutive SANT domains span residues 445-507 (QNNR…KLDP) and 548-603 (SNAA…EMIK).

In terms of assembly, component of ribosome-associated complex (RAC).

It is found in the nucleus. Its subcellular location is the cytoplasm. It localises to the cytosol. Its function is as follows. Acts both as a chaperone in the cytosol and as a chromatin regulator in the nucleus. When cytosolic, acts as a molecular chaperone: component of the ribosome-associated complex (RAC), a complex involved in folding or maintaining nascent polypeptides in a folding-competent state. When nuclear, mediates the switching from polycomb-repressed genes to an active state: specifically recruited at histone H2A ubiquitinated at 'Lys-119' (H2AK119ub), and promotes the displacement of the polycomb PRC1 complex from chromatin, thereby facilitating transcription activation. The sequence is that of DnaJ homolog subfamily C member 2 (dnajc2) from Danio rerio (Zebrafish).